Here is a 452-residue protein sequence, read N- to C-terminus: MAAATLLRATPRFSGLCASPTPFLQGRLRPLKAPASPFLCRGLAVEAKKTYVRDKPHVNVGTIGHVDHGKTTLTAAITKILAEGGGAKFKKYEEIDNAPEERARGITINAAHVEYSTAARHYAHTDCPGHADYVKNMITGTAPLDGCILVVAANDGPMPQTREHLLLAKQIGVEHVVVYVNKADAVQDSEMVELVELEIRELLTEFGYKGEETPVIVGSALCALEQRDPELGVKSVQKLLDAVDTYIPVPTRDLEKPFLLPVESVYSIPGRGTVVTGTLERGILKKGDECELLGHNKNIRTVVTGIEMFHKSLERAEAGDNLGALVRGLKREDLRRGLVMVKPGSIQPHQKVEAQVYILSKEEGGRHKPFVSHFMPVMFSLTWDMACRVILPPGKELAMPGEDLKLSLILRQPMILEKGQRFTLRDGNKTIGTGLVTDVPAMTEEDKNIKWS.

A mitochondrion-targeting transit peptide spans 1-43 (MAAATLLRATPRFSGLCASPTPFLQGRLRPLKAPASPFLCRGL). Residues 55–251 (KPHVNVGTIG…AVDTYIPVPT (197 aa)) form the tr-type G domain. A G1 region spans residues 64-71 (GHVDHGKT). GTP-binding residues include Asp67, Gly69, Lys70, Thr71, and Thr72. Thr71 provides a ligand contact to Mg(2+). N6-acetyllysine is present on Lys79. Position 88 is an N6-acetyllysine; alternate (Lys88). Lys88 is subject to N6-succinyllysine; alternate. The G2 stretch occupies residues 105-109 (GITIN). The tract at residues 126-129 (DCPG) is G3. The GTP site is built by Asn181, Asp184, Ser219, Ala220, and Leu221. Residues 181–184 (NKAD) form a G4 region. The segment at 219 to 221 (SAL) is G5. Lys234 carries the post-translational modification N6-succinyllysine. Lys256 bears the N6-acetyllysine mark. Position 278 is a phosphothreonine (Thr278). Lys286 is subject to N6-succinyllysine. A Phosphoserine modification is found at Ser312. N6-acetyllysine occurs at positions 361 and 418.

The protein belongs to the TRAFAC class translation factor GTPase superfamily. Classic translation factor GTPase family. EF-Tu/EF-1A subfamily. As to quaternary structure, interacts with NLRX1. Interacts with ATG16L1.

The protein localises to the mitochondrion. It catalyses the reaction GTP + H2O = GDP + phosphate + H(+). In terms of biological role, GTP hydrolase that promotes the GTP-dependent binding of aminoacyl-tRNA to the A-site of ribosomes during protein biosynthesis. Plays a role in the regulation of autophagy and innate immunity. Recruits ATG5-ATG12 and NLRX1 at mitochondria and serves as a checkpoint of the RIGI-MAVS pathway. In turn, inhibits RLR-mediated type I interferon while promoting autophagy. This chain is Elongation factor Tu, mitochondrial, found in Rattus norvegicus (Rat).